The following is a 565-amino-acid chain: Augmin complex subunit dgt3 (565 aa).

Coiled-coil stretches lie at residues 135–171 and 212–241; these read ELQL…AKKA and QDYD…IQFY.

This sequence belongs to the HAUS3 family. As to quaternary structure, component of the augmin complex composed of dgt2, dgt3, dgt4, dgt5, dgt6, msd1, msd5 and wac. The complex interacts directly or indirectly with microtubules and is required for centrosome-independent generation of spindle microtubules.

It localises to the cytoplasm. The protein localises to the cytoskeleton. The protein resides in the spindle. As part of the augmin complex, plays a role in centrosome-independent generation of spindle microtubules. The complex is required for mitotic spindle assembly through its involvement in localizing gamma-tubulin to spindle microtubules. This is Augmin complex subunit dgt3 from Drosophila melanogaster (Fruit fly).